The sequence spans 300 residues: Cell shape-determining protein MreC (300 aa).

The Cytoplasmic portion of the chain corresponds to 1-17 (MARDRTRPEDFTRPLRR). A helical membrane pass occupies residues 18–38 (ILVGGLVLLLLGIFLIWRIDS). Over 39–300 (PRVEQFRAAL…APAAVEGADG (262 aa)) the chain is Periplasmic. The stretch at 74–117 (QSYTRIYEQNQELRRELQQMKAWKEAALQLEQKNARLLDLNQVR) forms a coiled coil. The interval 277–300 (SDPGKLVAEPPAPPAPAAVEGADG) is disordered.

It belongs to the MreC family.

Its subcellular location is the cell inner membrane. Functionally, involved in formation and maintenance of cell shape. In Cereibacter sphaeroides (Rhodobacter sphaeroides), this protein is Cell shape-determining protein MreC.